The chain runs to 310 residues: MDDFSSISLLSVAMLVGCYVAGTIPLAVNFSEEKLKLITVLGAGLLCGTALAVIIPEGVHAIYEEILEGGHHSHGQAGVVEVSEAKGDAESVLSGGGKHEHSHEQLHACIGVSLVLGFVFMLLVDQIGSSHVHSTEDPESARVTSSKITTTLGLVVHAAADGVALGAAASTSQTSVQLIVFVAIMLHKAPAAFGLVSFLMHAGLERNRIRKHLLVFALAAPVLAMLTFLGLSQSSKEALSDINATGVAMLFSAGTFLYVATVHVLPEVGGGGHSHAASGGNGGKGLSKVEVVALVLGCLIPLVLSVGHHH.

Transmembrane regions (helical) follow at residues 7 to 27 (ISLL…IPLA), 35 to 55 (LKLI…AVII), 108 to 128 (ACIG…DQIG), 148 to 168 (ITTT…LGAA), 178 to 198 (LIVF…LVSF), 212 to 232 (HLLV…LGLS), 246 to 266 (GVAM…HVLP), and 289 to 309 (VEVV…VGHH).

It belongs to the ZIP transporter (TC 2.A.5) family. In terms of tissue distribution, expressed in brain, liver, ovary, and testis.

It localises to the golgi apparatus. The protein resides in the trans-Golgi network membrane. The protein localises to the cell membrane. It is found in the cytoplasm. Its subcellular location is the perinuclear region. It localises to the mitochondrion. The protein resides in the nucleus. It carries out the reaction Zn(2+)(in) = Zn(2+)(out). In terms of biological role, has dual functions as a membrane-bound androgen receptor and as an androgen-dependent zinc transporter both of which are mediated through G protein activation and are required for the androgen-dependent apoptotic response. Upon androgen binding, mediates apoptosis by directly activating a stimulatory G protein that leads to increased cAMP levels and MAP kinase activity and which is accompanied by increased intracellular free zinc levels. The protein is Zinc transporter ZIP9 of Micropogonias undulatus (Atlantic croaker).